A 345-amino-acid chain; its full sequence is Alpha-2-HS-glycoprotein (345 aa).

Residues 1–18 form the signal peptide; the sequence is MKSLVLLLCFAQLWGCQS. In terms of domain architecture, Cystatin fetuin-A-type 1 spans 19 to 133; it reads APQGTGLGFR…QFRVMHTQCH (115 aa). 6 disulfides stabilise this stretch: Cys32-Cys336, Cys89-Cys100, Cys114-Cys132, Cys146-Cys149, Cys208-Cys219, and Cys230-Cys247. Asn99 is a glycosylation site (N-linked (GlcNAc...) asparagine). Ser134 bears the Phosphoserine mark. Residue Thr135 is modified to Phosphothreonine. Ser138 is subject to Phosphoserine. Residues 144-250 enclose the Cystatin fetuin-A-type 2 domain; it reads KLCPRCPLLT…EEVSVACKLF (107 aa). Residues Asn156 and Asn176 are each glycosylated (N-linked (GlcNAc...) asparagine). Residues Ser305, Ser309, Ser312, and Ser314 each carry the phosphoserine modification. Residues 312–334 are disordered; it reads SASGETLHSPKVGQPGAAGPVSP.

This sequence belongs to the fetuin family. In terms of processing, phosphorylated by FAM20C in the extracellular medium. In terms of tissue distribution, liver is the major site of synthesis, but fetuin is also expressed in limb buds and other extrahepatic tissues during development.

The protein resides in the secreted. In terms of biological role, probably involved in differentiation. Its function is as follows. (Microbial infection) Facilitates invasion of hepatocytes by Plasmodium berghei sporozoites. In Mus musculus (Mouse), this protein is Alpha-2-HS-glycoprotein (Ahsg).